The chain runs to 429 residues: Cell cycle protein kinase spo4 (429 aa).

The Protein kinase domain occupies 40–402; it reads YHVVKLVGAG…KAKTALQHEF (363 aa). ATP is bound by residues 46–54 and K95; that span reads VGAGSFSSV. Residue D182 is the Proton acceptor of the active site. Residue T264 is modified to Phosphothreonine.

Belongs to the protein kinase superfamily. Ser/Thr protein kinase family. CDC7 subfamily. In terms of assembly, interacts with spo6.

The protein resides in the nucleus. The enzyme catalyses L-seryl-[protein] + ATP = O-phospho-L-seryl-[protein] + ADP + H(+). It carries out the reaction L-threonyl-[protein] + ATP = O-phospho-L-threonyl-[protein] + ADP + H(+). In terms of biological role, required for the initiation of meiosis II and progression through anaphase II. This chain is Cell cycle protein kinase spo4 (spo4), found in Schizosaccharomyces pombe (strain 972 / ATCC 24843) (Fission yeast).